Here is a 372-residue protein sequence, read N- to C-terminus: MSNDKDSFNVSDLTAALKDEDRAGLVNALKNKLQNLAGQRSDVLENLTPNVRKRVDALRDIQSQHDELEAKFREERAILEAKYQTLYQPLYVKRYEIVNGTTEVELAPEDDTKVDQGEEKTAEEKGVPSFWLTALKNNDVISEEVTERDEGALKYLKDIKWCKIEEPKGFKLEFFFDTNPYFKNTVLTKSYHMIDEDEPLLEKAMGTEIDWYPGKCLTQKILKKKPKKGSKNTKPITKLEDCESFFNFFSPPEVPDEDEDIDEERAEDLQNLMEQDYDIGSTIREKIIPRAVSWFTGEAMEAEDFEIDDDEEDDIDEDEDEEDEEDEEDDDDEDEEESKTKKKPSIGNKKGGRSQIVGEGKQDERPPECKQQ.

A coiled-coil region spans residues Val26–Glu80. Ser41 is subject to Phosphoserine. The short motif at Leu47–Gln62 is the Nuclear export signal element. Positions Lys223–Lys228 match the Nuclear localization signal motif. Residues Ala299–Gln372 form a disordered region. The span at Met300 to Glu337 shows a compositional bias: acidic residues. Residues Gly360–Gln372 show a composition bias toward basic and acidic residues. At Cys369 the chain carries Cysteine methyl ester. A lipid anchor (S-farnesyl cysteine) is attached at Cys369. A propeptide spans Lys370 to Gln372 (removed in mature form).

Belongs to the nucleosome assembly protein (NAP) family. In terms of assembly, can form homomeric and heteromeric protein complexes with NAP1;2, NAP1;3 and NAP1;4. Binds histone H2A. Interacts with PP438/PNM1. Post-translationally, prenylation of the protein is required for its function during the cell proliferation phase of leaf development. Ubiquitous.

The protein resides in the nucleus. It localises to the cytoplasm. In terms of biological role, may modulate chromatin structure by regulation of nucleosome assembly/disassembly. Contributes to the regulation of cell proliferation and cell expansion. May function in nucleotide excision repair (NER). Involved in somatic homologous recombination. The chain is Nucleosome assembly protein 1;1 (NAP1;1) from Arabidopsis thaliana (Mouse-ear cress).